Here is a 1323-residue protein sequence, read N- to C-terminus: Glutamate receptor ionotropic, NMDA 2D (1323 aa).

The signal sequence occupies residues 1–27 (MRGAGGPRGPRGPAKMLLLLALACASP). Over 28–579 (FPEEVPGPGA…SPSAFLEPYS (552 aa)) the chain is Extracellular. Asparagine 89 carries N-linked (GlcNAc...) asparagine glycosylation. Cysteine 101 and cysteine 345 are disulfide-bonded. Asparagine 349, asparagine 363, asparagine 381, and asparagine 464 each carry an N-linked (GlcNAc...) asparagine glycan. 2 cysteine pairs are disulfide-bonded: cysteine 452–cysteine 480 and cysteine 459–cysteine 481. Residues serine 536, threonine 538, and arginine 543 each contribute to the L-glutamate site. The N-linked (GlcNAc...) asparagine glycan is linked to asparagine 566. A helical membrane pass occupies residues 580–601 (PAVWVMMFVMCLTVVAVTVFIF). Topologically, residues 602 to 626 (EYLSPVGYNRSLATGKRPGGSTFTI) are cytoplasmic. The discontinuously helical intramembrane region spans 627–638 (GKSIWLLWALVF). The interval 628 to 647 (KSIWLLWALVFNNSVPVENP) is pore-forming. At 639–650 (NNSVPVENPRGT) the chain is on the cytoplasmic side. A helical membrane pass occupies residues 651–671 (TSKIMVLVWAFFAVIFLASYT). Residues 672 to 840 (ANLAAFMIQE…EVMSSKLDID (169 aa)) lie on the Extracellular side of the membrane. A glycan (N-linked (GlcNAc...) asparagine) is linked at asparagine 712. 3 residues coordinate L-glutamate: serine 714, threonine 715, and aspartate 756. The cysteines at positions 770 and 825 are disulfide-linked. Residues 841–864 (NMAGVFYMLLVAMGLSLLVFAWEH) traverse the membrane as a helical segment. The Cytoplasmic portion of the chain corresponds to 865-1323 (LVYWRLRHCL…AHFSSLESEV (459 aa)). 3 disordered regions span residues 897 to 952 (EAAP…PGGA), 977 to 1112 (AAPR…SLGG), and 1201 to 1323 (PWAA…ESEV). A compositionally biased stretch (pro residues) spans 899-929 (APPPAKPPPPPQPLPSPAYPAARPPPGPAPF). The segment covering 931–940 (PRERAAADRW) has biased composition (basic and acidic residues). Residues 977-986 (AAPRGAAGRP) are compositionally biased toward low complexity. Residues 987-1001 (LSPPTTQPPQKPPPS) show a composition bias toward pro residues. Positions 1030 to 1039 (AAAAAAVGPP) are enriched in low complexity. A compositionally biased stretch (pro residues) spans 1080–1092 (TAPPPRRAAPPPC). Over residues 1208-1228 (PRRRARCGCPRPHPHRPRASH) the composition is skewed to basic residues. Arginine 1303 is modified (omega-N-methylarginine). Serine 1313 carries the post-translational modification Phosphoserine. The PDZ-binding signature appears at 1321–1323 (SEV).

It belongs to the glutamate-gated ion channel (TC 1.A.10.1) family. NR2D/GRIN2D subfamily. As to quaternary structure, heterotetramer. Forms heterotetrameric channels composed of two GluN1/zeta subunits (GRIN1), and two identical GluN2/epsilon subunits (GRIN2A, GRIN2B, GRIN2C or GRIN2D) or GluN3 subunits (GRIN3A or GRIN3B) (in vitro). In vivo, the subunit composition may depend on the expression levels of the different subunits. Interacts with PDZ domains of PATJ and DLG4. In terms of tissue distribution, expressed in brain, mainly in the subcortical region.

Its subcellular location is the cell membrane. The protein resides in the postsynaptic cell membrane. It carries out the reaction Ca(2+)(in) = Ca(2+)(out). The catalysed reaction is Na(+)(in) = Na(+)(out). The enzyme catalyses K(+)(in) = K(+)(out). In terms of biological role, component of N-methyl-D-aspartate (NMDA) receptors (NMDARs) that function as heterotetrameric, ligand-gated cation channels with high calcium permeability and voltage-dependent block by Mg(2+). Participates in synaptic plasticity for learning and memory formation. Channel activation requires binding of the neurotransmitter L-glutamate to the GluN2 subunit, glycine or D-serine binding to the GluN1 subunit, plus membrane depolarization to eliminate channel inhibition by Mg(2+). NMDARs mediate simultaneously the potasium efflux and the influx of calcium and sodium. Each GluN2 subunit confers differential attributes to channel properties, including activation, deactivation and desensitization kinetics, pH sensitivity, Ca2(+) permeability, and binding to allosteric modulators. The polypeptide is Glutamate receptor ionotropic, NMDA 2D (Rattus norvegicus (Rat)).